We begin with the raw amino-acid sequence, 211 residues long: N,O-diacetylmuramidase (211 aa).

Active-site residues include aspartate 6 and glutamate 100. Cysteine 108 and cysteine 147 are joined by a disulfide.

The protein belongs to the glycosyl hydrolase 25 family.

Its subcellular location is the secreted. It is found in the extracellular space. The enzyme catalyses Hydrolysis of (1-&gt;4)-beta-linkages between N-acetylmuramic acid and N-acetyl-D-glucosamine residues in a peptidoglycan and between N-acetyl-D-glucosamine residues in chitodextrins.. In terms of biological role, this enzyme has both lysozyme (acetylmuramidase) and diacetylmuramidase activities. This Chalaropsis sp protein is N,O-diacetylmuramidase.